The primary structure comprises 741 residues: Condensin complex subunit 2 (741 aa).

The disordered stretch occupies residues 1–67 (MGPPGPALPA…NDDEKERLQR (67 aa)). Ser15, Ser25, and Ser28 each carry phosphoserine. Position 49 is a phosphothreonine (Thr49). Phosphoserine occurs at positions 70, 78, 81, 87, 89, 92, 96, 201, and 233. Residues 361–377 (CGDFPDGSLGDDFDAND) are compositionally biased toward acidic residues. The interval 361 to 383 (CGDFPDGSLGDDFDANDEPDHTA) is disordered. Ser432 carries the post-translational modification Phosphoserine. The interval 447-467 (FRPRRKQDAPSQSENKKKSTK) is disordered. Lys488 participates in a covalent cross-link: Glycyl lysine isopeptide (Lys-Gly) (interchain with G-Cter in SUMO2). At Ser496 the chain carries Phosphoserine. Phosphothreonine is present on residues Thr598 and Thr605. At Lys637 the chain carries N6-acetyllysine.

It belongs to the CND2 (condensin subunit 2) family. As to quaternary structure, component of the condensin complex, which contains the SMC2 and SMC4 heterodimer, and three non SMC subunits that probably regulate the complex: NCAPH/BRRN1, NCAPD2/CAPD2 and NCAPG. In terms of processing, phosphorylated by CDK1. Its phosphorylation, as well as that of NCAPD2 and NCAPG subunits, activates the condensin complex and is required for chromosome condensation. Widely expressed at low level. Expressed in proliferating cells.

The protein resides in the nucleus. Its subcellular location is the cytoplasm. The protein localises to the chromosome. In terms of biological role, regulatory subunit of the condensin complex, a complex required for conversion of interphase chromatin into mitotic-like condense chromosomes. The condensin complex probably introduces positive supercoils into relaxed DNA in the presence of type I topoisomerases and converts nicked DNA into positive knotted forms in the presence of type II topoisomerases. Early in neurogenesis, may play an essential role to ensure accurate mitotic chromosome condensation in neuron stem cells, ultimately affecting neuron pool and cortex size. In Homo sapiens (Human), this protein is Condensin complex subunit 2.